The following is a 395-amino-acid chain: Renin (395 aa).

Residues 1–21 (MLRSWEFVLLISCFLCFSSDA) form the signal peptide. Residues 22-43 (LQRISLKKMPSIRETLQEMGMK) constitute a propeptide, activation peptide. A glycan (N-linked (GlcNAc...) asparagine) is linked at asparagine 64. The 314-residue stretch at 79 to 392 (YYGEISIGTP…DRQNNRIGFA (314 aa)) folds into the Peptidase A1 domain. Aspartate 97 is an active-site residue. 2 disulfide bridges follow: cysteine 110–cysteine 117 and cysteine 274–cysteine 278. Aspartate 283 is a catalytic residue. Cysteine 316 and cysteine 351 are joined by a disulfide.

The protein belongs to the peptidase A1 family. In terms of processing, N-glycosylated. In terms of tissue distribution, expressed by the venom gland (at protein level).

Its subcellular location is the secreted. The catalysed reaction is Cleavage of Leu-|-Xaa bond in angiotensinogen to generate angiotensin I.. With respect to regulation, inhibited completely by aspartyl protease inhibitor pepstatin A, but not by the serine- or metalloproteinase inhibitors PMSF or EDTA. Its function is as follows. Renin is a highly specific endopeptidase, whose only known function is to generate angiotensin I from angiotensinogen in the plasma, initiating a cascade of reactions that produce an elevation of blood pressure and increased sodium retention by the kidney. This protein is also found in snake venom and shown to specifically cleave human and porcine angiotensinogen into angiotensin I. It does not have general protease activity, no cleavage of alpha or beta casein. May be directly responsible for elevation of blood pressure in the victims of envenomation. The sequence is that of Renin from Echis ocellatus (Ocellated saw-scaled viper).